The chain runs to 87 residues: Small cysteine-rich outer membrane protein omcA (87 aa).

The first 19 residues, 1 to 19 (MKKAVLLATVFCGVVGLTS), serve as a signal peptide directing secretion. Cys-20 carries N-palmitoyl cysteine lipidation. The S-diacylglycerol cysteine moiety is linked to residue Cys-20.

In terms of assembly, part of a disulfide cross-linked outer membrane complex (COMC) composed of the major outer membrane porin (MOMP), the small cysteine-rich protein (omcA) and the large cysteine-rich periplasmic protein (omcB). In terms of processing, N-terminal amide-linked and S-diacylglycerol cysteine-linked to 16:0, 18:0, 15:0 branched, and 17:0 branched fatty acids (ratio 6:5:3:4) in the EB stage. The exact distribution of fatty acids has not been determined. The N-terminus is blocked.

The protein localises to the cell outer membrane. In elementary bodies (EBs, the infectious stage, which is able to survive outside the host cell) provides the structural integrity of the outer envelope through disulfide cross-links with the large cysteine-rich periplasmic protein and the major outer membrane porin. It has been described in publications as the Sarkosyl-insoluble COMC (Chlamydia outer membrane complex), and serves as the functional equivalent of peptidoglycan. This is Small cysteine-rich outer membrane protein omcA (omcA) from Chlamydia psittaci (Chlamydophila psittaci).